A 142-amino-acid chain; its full sequence is Translation initiation factor 2 subunit beta (142 aa).

Belongs to the eIF-2-beta/eIF-5 family. Heterotrimer composed of an alpha, a beta and a gamma chain.

Functionally, eIF-2 functions in the early steps of protein synthesis by forming a ternary complex with GTP and initiator tRNA. The polypeptide is Translation initiation factor 2 subunit beta (Thermococcus kodakarensis (strain ATCC BAA-918 / JCM 12380 / KOD1) (Pyrococcus kodakaraensis (strain KOD1))).